Here is a 131-residue protein sequence, read N- to C-terminus: Large ribosomal subunit protein bL17 (131 aa).

The protein belongs to the bacterial ribosomal protein bL17 family. In terms of assembly, part of the 50S ribosomal subunit. Contacts protein L32.

In Thermotoga neapolitana (strain ATCC 49049 / DSM 4359 / NBRC 107923 / NS-E), this protein is Large ribosomal subunit protein bL17.